The following is a 230-amino-acid chain: Sugar fermentation stimulation protein homolog (230 aa).

Belongs to the SfsA family.

This is Sugar fermentation stimulation protein homolog from Pelobacter propionicus (strain DSM 2379 / NBRC 103807 / OttBd1).